The chain runs to 592 residues: Aspartate--tRNA(Asp/Asn) ligase (592 aa).

Glutamate 172 is an L-aspartate binding site. Residues 196 to 199 (QLFK) are aspartate. Arginine 218 serves as a coordination point for L-aspartate. ATP is bound by residues 218 to 220 (RDE) and glutamine 227. Histidine 442 lines the L-aspartate pocket. Residue glutamate 476 coordinates ATP. Residue arginine 483 participates in L-aspartate binding. 528–531 (GWDR) contributes to the ATP binding site. A disordered region spans residues 553 to 592 (SGTDPLTGAPTPITPEQRKEAGIDADPYAAAGRPPGRQSA).

Belongs to the class-II aminoacyl-tRNA synthetase family. Type 1 subfamily. In terms of assembly, homodimer.

The protein localises to the cytoplasm. The enzyme catalyses tRNA(Asx) + L-aspartate + ATP = L-aspartyl-tRNA(Asx) + AMP + diphosphate. In terms of biological role, aspartyl-tRNA synthetase with relaxed tRNA specificity since it is able to aspartylate not only its cognate tRNA(Asp) but also tRNA(Asn). Reaction proceeds in two steps: L-aspartate is first activated by ATP to form Asp-AMP and then transferred to the acceptor end of tRNA(Asp/Asn). This Acidothermus cellulolyticus (strain ATCC 43068 / DSM 8971 / 11B) protein is Aspartate--tRNA(Asp/Asn) ligase.